A 308-amino-acid chain; its full sequence is 4-diphosphocytidyl-2-C-methyl-D-erythritol kinase (308 aa).

K24 is an active-site residue. An ATP-binding site is contributed by 118-128 (PVGAGMAGGSA). D160 is a catalytic residue.

It belongs to the GHMP kinase family. IspE subfamily.

The enzyme catalyses 4-CDP-2-C-methyl-D-erythritol + ATP = 4-CDP-2-C-methyl-D-erythritol 2-phosphate + ADP + H(+). It functions in the pathway isoprenoid biosynthesis; isopentenyl diphosphate biosynthesis via DXP pathway; isopentenyl diphosphate from 1-deoxy-D-xylulose 5-phosphate: step 3/6. Functionally, catalyzes the phosphorylation of the position 2 hydroxy group of 4-diphosphocytidyl-2C-methyl-D-erythritol. This Bifidobacterium adolescentis (strain ATCC 15703 / DSM 20083 / NCTC 11814 / E194a) protein is 4-diphosphocytidyl-2-C-methyl-D-erythritol kinase.